A 385-amino-acid polypeptide reads, in one-letter code: Chorismate synthase (385 aa).

Arg-40 and Arg-46 together coordinate NADP(+). FMN contacts are provided by residues 128-130 (RAS), 248-249 (QA), Gly-293, 308-312 (KAIPS), and Arg-334.

Belongs to the chorismate synthase family. In terms of assembly, homotetramer. FMNH2 serves as cofactor.

The enzyme catalyses 5-O-(1-carboxyvinyl)-3-phosphoshikimate = chorismate + phosphate. Its pathway is metabolic intermediate biosynthesis; chorismate biosynthesis; chorismate from D-erythrose 4-phosphate and phosphoenolpyruvate: step 7/7. Catalyzes the anti-1,4-elimination of the C-3 phosphate and the C-6 proR hydrogen from 5-enolpyruvylshikimate-3-phosphate (EPSP) to yield chorismate, which is the branch point compound that serves as the starting substrate for the three terminal pathways of aromatic amino acid biosynthesis. This reaction introduces a second double bond into the aromatic ring system. This chain is Chorismate synthase, found in Endomicrobium trichonymphae.